The following is a 447-amino-acid chain: Argininosuccinate synthase (447 aa).

ATP contacts are provided by residues 20-28 (AFSGGLDTS) and A46. Y102 is an L-citrulline binding site. ATP is bound by residues G132 and T134. T134, N138, and D139 together coordinate L-aspartate. Position 138 (N138) interacts with L-citrulline. D139 serves as a coordination point for ATP. Positions 142 and 195 each coordinate L-citrulline. D197 contacts ATP. Residues T204, E206, and E283 each coordinate L-citrulline.

The protein belongs to the argininosuccinate synthase family. Type 2 subfamily. In terms of assembly, homotetramer.

The protein resides in the cytoplasm. It catalyses the reaction L-citrulline + L-aspartate + ATP = 2-(N(omega)-L-arginino)succinate + AMP + diphosphate + H(+). It functions in the pathway amino-acid biosynthesis; L-arginine biosynthesis; L-arginine from L-ornithine and carbamoyl phosphate: step 2/3. The polypeptide is Argininosuccinate synthase (Neisseria gonorrhoeae (strain ATCC 700825 / FA 1090)).